Consider the following 133-residue polypeptide: Glycine cleavage system H protein (133 aa).

The Lipoyl-binding domain occupies 24 to 106; sequence IATIGISAYA…YGDGWLLKVR (83 aa). Lys65 is modified (N6-lipoyllysine).

Belongs to the GcvH family. As to quaternary structure, the glycine cleavage system is composed of four proteins: P, T, L and H. The cofactor is (R)-lipoate.

The glycine cleavage system catalyzes the degradation of glycine. The H protein shuttles the methylamine group of glycine from the P protein to the T protein. In Crocosphaera subtropica (strain ATCC 51142 / BH68) (Cyanothece sp. (strain ATCC 51142)), this protein is Glycine cleavage system H protein.